The following is a 152-amino-acid chain: MAEVEPDVSAAALAKKRTFKKFSFKGVDLDALLDMPTDDLVELFPSRIRRRMSRGLTRKPMALIKKLRKAKLDAPAGEKPEVVRTHLRNMVIMPEMIGSIIGVYNGKTFNQIEIKPEMIGHYLAEFSITYKPVRHGKPGHGATHSSRFIPLK.

This sequence belongs to the universal ribosomal protein uS19 family.

Its subcellular location is the cytoplasm. In Arabidopsis thaliana (Mouse-ear cress), this protein is Small ribosomal subunit protein uS19z (RPS15B).